Reading from the N-terminus, the 212-residue chain is Thymidylate kinase (212 aa).

10-17 serves as a coordination point for ATP; it reads GIDGCGKT.

This sequence belongs to the thymidylate kinase family.

The enzyme catalyses dTMP + ATP = dTDP + ADP. Functionally, phosphorylation of dTMP to form dTDP in both de novo and salvage pathways of dTTP synthesis. The sequence is that of Thymidylate kinase from Synechococcus sp. (strain RCC307).